Reading from the N-terminus, the 129-residue chain is Small ribosomal subunit protein uS9 (129 aa).

It belongs to the universal ribosomal protein uS9 family.

The sequence is that of Small ribosomal subunit protein uS9 from Chlorobium phaeovibrioides (strain DSM 265 / 1930) (Prosthecochloris vibrioformis (strain DSM 265)).